The following is a 1060-amino-acid chain: Protein FAM184B (1060 aa).

Residues 1–17 (MASALNSKINPPGTCQG) are compositionally biased toward polar residues. Residues 1 to 24 (MASALNSKINPPGTCQGSKADGGA) form a disordered region. Residues 51-159 (ALNTRQDEAE…EMLELKADYE (109 aa)) are a coiled coil. Residues 165–191 (LTSHEATPQGRLPQESPETKSEPGQGP) form a disordered region. 2 coiled-coil regions span residues 192-333 (EMQE…DRMM) and 402-502 (MKQQ…RLEE). Disordered regions lie at residues 532–566 (QDPCLKLDETSPRGEEYQDKLAAEEGTSSDEEERT), 681–700 (TEERLKKESSHSLQIQHQTH), and 762–803 (GRQQ…GSGE). Basic and acidic residues-rich tracts occupy residues 536–554 (LKLDETSPRGEEYQDKLAA), 681–690 (TEERLKKESS), and 773–785 (DSKDHIIATEERG). A coiled-coil region spans residues 584–769 (LKEKTSKIQR…ALGRQQASSQ (186 aa)). Positions 806 to 934 (GLWEENAQLQ…KQLTEERRFH (129 aa)) form a coiled coil. Composition is skewed to polar residues over residues 994-1009 (SRINAPPITTSPSLDP) and 1018-1030 (KPNQSTDAKTATR). Residues 994–1050 (SRINAPPITTSPSLDPSPSCGRTYKPNQSTDAKTATRTPDGETAQAKEVQQKQGSPH) are disordered.

This sequence belongs to the FAM184 family.

The sequence is that of Protein FAM184B (FAM184B) from Homo sapiens (Human).